The sequence spans 172 residues: Small ribosomal subunit protein uS5 (172 aa).

The region spanning 17 to 80 (LREKMIAINR…EEARRNLAKI (64 aa)) is the S5 DRBM domain.

The protein belongs to the universal ribosomal protein uS5 family. Part of the 30S ribosomal subunit. Contacts proteins S4 and S8.

In terms of biological role, with S4 and S12 plays an important role in translational accuracy. Functionally, located at the back of the 30S subunit body where it stabilizes the conformation of the head with respect to the body. This Variovorax paradoxus (strain S110) protein is Small ribosomal subunit protein uS5.